The primary structure comprises 320 residues: Aristolochene synthase (320 aa).

The segment covering 1–14 (MKKPNGTNGASSSL) has biased composition (polar residues). Residues 1 to 20 (MKKPNGTNGASSSLEPPPST) are disordered. Aspartate 90, asparagine 219, serine 223, and glutamate 227 together coordinate Mg(2+). 2 residues coordinate (2E,6E)-farnesyl diphosphate: arginine 314 and tyrosine 315.

Belongs to the terpene synthase family. As to quaternary structure, homodimer. Mg(2+) serves as cofactor.

The catalysed reaction is (2E,6E)-farnesyl diphosphate = (+)-aristolochene + diphosphate. It functions in the pathway sesquiterpene biosynthesis; aristolochene biosynthesis; aristolochene from farnesyl diphosphate: step 1/1. Its function is as follows. Catalyzes the cyclization of trans,trans-farnesyl diphosphate (FPP) to the bicyclic sesquiterpene aristolochene. Produces germacrene A as an enzyme-bound intermediate that is not released by the enzyme, but is further cyclized to produce aristolochene. Aristolochene is the likely parent compound for a number of sesquiterpenoid toxins produced by filamentous fungi. The sequence is that of Aristolochene synthase (Ari1) from Aspergillus terreus.